Here is a 553-residue protein sequence, read N- to C-terminus: MLTDIEIADQAQLTPINEIAAQLGLDEDAIEQYGKYKAKINLPVQATPEKKHKLVLVTSINPTPAGEGKSTVLVGLGDALSLLHHQTVIAMREPSMGPVFGMKGGATGGGYSQVVPMEDINLHFTGDFHALTSANNTLAALIDNYLMRGNELGLDPRRVIWKRVEDVNDRALRDVVTGLGGIMQGVPRQTGFDITPASELMAILCLATDLSDLKARVSRIVVGYTYDKEPVTVGQLGFEEAVTILLKDAIKPNLVQTLGHTPAIVHGGPFANIAHGCNSVLATKTALQLADYTVTEAGFGADLGAEKFLDIKRPVLGKTPDAVVIVATVRALEYNGGASLQALKDENLTELENGLQNLNRHIANMQRYGLPLVVAINHFATDTPAEIKLIEDNCKARGVNVVVADAWAKGGAGTLDLAKEVVALAEQEASFTPLYDYQATPKEKVETIATKVYGAGRVAFSKKALNQLKQFEKLGWNDLPICIAKTQYSFTDDQTQLGAPEGFTFHIREFVPKLGAGFIVALAGNMLTMPGLPKVPAAVKMTIDSEGKITGLF.

63 to 70 contributes to the ATP binding site; it reads TPAGEGKS.

Belongs to the formate--tetrahydrofolate ligase family.

It carries out the reaction (6S)-5,6,7,8-tetrahydrofolate + formate + ATP = (6R)-10-formyltetrahydrofolate + ADP + phosphate. It participates in one-carbon metabolism; tetrahydrofolate interconversion. The protein is Formate--tetrahydrofolate ligase of Limosilactobacillus fermentum (strain NBRC 3956 / LMG 18251) (Lactobacillus fermentum).